The chain runs to 598 residues: Arginine--tRNA ligase (598 aa).

A 'HIGH' region motif is present at residues 135-145; the sequence is ANPTGPIHIGG. The interval 229-248 is disordered; that stretch reads VDGGTDEKGEPLGEGDSEQR. The segment covering 231-248 has biased composition (basic and acidic residues); the sequence is GGTDEKGEPLGEGDSEQR.

It belongs to the class-I aminoacyl-tRNA synthetase family. As to quaternary structure, monomer.

The protein localises to the cytoplasm. The catalysed reaction is tRNA(Arg) + L-arginine + ATP = L-arginyl-tRNA(Arg) + AMP + diphosphate. The protein is Arginine--tRNA ligase of Bifidobacterium animalis subsp. lactis (strain AD011).